A 558-amino-acid chain; its full sequence is MSFKTDAETAQSSTMRPIGEIAAKLGLNVDNIEPYGHYKAKINPAEAFKLPQKQGRLILVTAINPTPAGEGKTTVTIGLADALRHIGKDSVIALREPSLGPVFGVKGGAAGGGYAQVLPMEDINLHFTGDFHAIGAANNLLAAMLDNHIYQGNELNIDPKRVLWRRVVDMNDRQLRNIIDGMGKPVDGVMRPDGFDITVASEVMAVFCLAKDISDLKERFGNILVAYAKDGSPVYAKDLKAHGAMAALLKDAIKPNLVQTIEGTPAFVHGGPFANIAHGCNSVTATRLAKHLADYAVTEAGFGADLGAEKFCDIKCRLAGLKPDAAVVVATVRALKYNGGVERANLGEENLEALAKGLPNLLKHISNLKNVFGLPVVVALNRFVSDSDAELAMIEKACAEHGVEVSLTEVWGKGGAGGADLARKVVNAIDNQPNNFGFAYDVELGIKDKIRAIAQKVYGAEDVDFSAEASAEIASLEKLGLDKMPICMAKTQYSLSDNAKLLGCPEGFRIAVRGITVSAGAGFIVALCGNMMKMPGLPKVPAAEKIDVDEHGVIHGLF.

Residue 66–73 coordinates ATP; the sequence is TPAGEGKT.

It belongs to the formate--tetrahydrofolate ligase family.

The enzyme catalyses (6S)-5,6,7,8-tetrahydrofolate + formate + ATP = (6R)-10-formyltetrahydrofolate + ADP + phosphate. It functions in the pathway one-carbon metabolism; tetrahydrofolate interconversion. This Neisseria gonorrhoeae (strain ATCC 700825 / FA 1090) protein is Formate--tetrahydrofolate ligase.